Reading from the N-terminus, the 51-residue chain is Large ribosomal subunit protein eL39 (51 aa).

Belongs to the eukaryotic ribosomal protein eL39 family.

The polypeptide is Large ribosomal subunit protein eL39 (Pyrobaculum neutrophilum (strain DSM 2338 / JCM 9278 / NBRC 100436 / V24Sta) (Thermoproteus neutrophilus)).